A 115-amino-acid polypeptide reads, in one-letter code: Large ribosomal subunit protein bL20 (115 aa).

Belongs to the bacterial ribosomal protein bL20 family.

Its function is as follows. Binds directly to 23S ribosomal RNA and is necessary for the in vitro assembly process of the 50S ribosomal subunit. It is not involved in the protein synthesizing functions of that subunit. The sequence is that of Large ribosomal subunit protein bL20 from Prochlorococcus marinus (strain MIT 9313).